We begin with the raw amino-acid sequence, 420 residues long: Gamma-glutamyl phosphate reductase (420 aa).

Belongs to the gamma-glutamyl phosphate reductase family.

It is found in the cytoplasm. It carries out the reaction L-glutamate 5-semialdehyde + phosphate + NADP(+) = L-glutamyl 5-phosphate + NADPH + H(+). The protein operates within amino-acid biosynthesis; L-proline biosynthesis; L-glutamate 5-semialdehyde from L-glutamate: step 2/2. In terms of biological role, catalyzes the NADPH-dependent reduction of L-glutamate 5-phosphate into L-glutamate 5-semialdehyde and phosphate. The product spontaneously undergoes cyclization to form 1-pyrroline-5-carboxylate. The polypeptide is Gamma-glutamyl phosphate reductase (Streptococcus pneumoniae serotype 4 (strain ATCC BAA-334 / TIGR4)).